Reading from the N-terminus, the 353-residue chain is Quinolinate synthase (353 aa).

The iminosuccinate site is built by His47 and Ser68. Cys113 is a [4Fe-4S] cluster binding site. Iminosuccinate is bound by residues 139–141 and Ser156; that span reads YAN. [4Fe-4S] cluster is bound at residue Cys200. Iminosuccinate is bound by residues 226 to 228 and Thr243; that span reads HPE. Cys297 lines the [4Fe-4S] cluster pocket.

This sequence belongs to the quinolinate synthase family. Type 1 subfamily. [4Fe-4S] cluster serves as cofactor.

Its subcellular location is the cytoplasm. It carries out the reaction iminosuccinate + dihydroxyacetone phosphate = quinolinate + phosphate + 2 H2O + H(+). Its pathway is cofactor biosynthesis; NAD(+) biosynthesis; quinolinate from iminoaspartate: step 1/1. Catalyzes the condensation of iminoaspartate with dihydroxyacetone phosphate to form quinolinate. In Vibrio vulnificus (strain CMCP6), this protein is Quinolinate synthase.